Consider the following 256-residue polypeptide: Ciliary microtubule associated protein 1A (256 aa).

3 STPGR repeats span residues 66–92 (PGPG…IYGR), 181–206 (PGPG…MTAR), and 217–242 (PGPG…FGIR). A disordered region spans residues 91 to 115 (GRPRDISSFRTPGPGSYSPERAGKS).

Belongs to the CIMAP family.

It is found in the cytoplasm. The protein localises to the cytoskeleton. It localises to the flagellum axoneme. In terms of biological role, outer dense fibers are filamentous structures located on the outside of the axoneme in the midpiece and principal piece of the mammalian sperm tail. May help to maintain the passive elastic structures and elastic recoil of the sperm tail. This is Ciliary microtubule associated protein 1A (cimap1a) from Xenopus laevis (African clawed frog).